The following is a 156-amino-acid chain: ATP synthase subunit b (156 aa).

A helical membrane pass occupies residues Leu12–Ala32.

It belongs to the ATPase B chain family. F-type ATPases have 2 components, F(1) - the catalytic core - and F(0) - the membrane proton channel. F(1) has five subunits: alpha(3), beta(3), gamma(1), delta(1), epsilon(1). F(0) has three main subunits: a(1), b(2) and c(10-14). The alpha and beta chains form an alternating ring which encloses part of the gamma chain. F(1) is attached to F(0) by a central stalk formed by the gamma and epsilon chains, while a peripheral stalk is formed by the delta and b chains.

The protein localises to the cell inner membrane. Its function is as follows. F(1)F(0) ATP synthase produces ATP from ADP in the presence of a proton or sodium gradient. F-type ATPases consist of two structural domains, F(1) containing the extramembraneous catalytic core and F(0) containing the membrane proton channel, linked together by a central stalk and a peripheral stalk. During catalysis, ATP synthesis in the catalytic domain of F(1) is coupled via a rotary mechanism of the central stalk subunits to proton translocation. Functionally, component of the F(0) channel, it forms part of the peripheral stalk, linking F(1) to F(0). This Stutzerimonas stutzeri (strain A1501) (Pseudomonas stutzeri) protein is ATP synthase subunit b.